A 473-amino-acid polypeptide reads, in one-letter code: Photosystem II CP43 reaction center protein (473 aa).

Residues 1-14 (MKILYSLRRFYHVE) constitute a propeptide that is removed on maturation. Threonine 15 bears the N-acetylthreonine mark. At threonine 15 the chain carries Phosphothreonine. 5 consecutive transmembrane segments (helical) span residues 69-93 (LFEVAHFVPEKPMYEQGLILLPHLA), 134-155 (LLGPETLEESFPFFGYVWKDRN), 178-200 (KALYFGGVYDTWAPGGGDVRKIT), 255-275 (KPFAWARRAFVWSGEAYLSYS), and 291-312 (WFNNTAYPSEFYGPTGPEASQA). Position 367 (glutamate 367) interacts with [CaMn4O5] cluster. A helical membrane pass occupies residues 447 to 471 (RARAAAAGFEKGIDRDLEPVLYMTP).

This sequence belongs to the PsbB/PsbC family. PsbC subfamily. In terms of assembly, PSII is composed of 1 copy each of membrane proteins PsbA, PsbB, PsbC, PsbD, PsbE, PsbF, PsbH, PsbI, PsbJ, PsbK, PsbL, PsbM, PsbT, PsbX, PsbY, PsbZ, Psb30/Ycf12, at least 3 peripheral proteins of the oxygen-evolving complex and a large number of cofactors. It forms dimeric complexes. Binds multiple chlorophylls and provides some of the ligands for the Ca-4Mn-5O cluster of the oxygen-evolving complex. It may also provide a ligand for a Cl- that is required for oxygen evolution. PSII binds additional chlorophylls, carotenoids and specific lipids. is required as a cofactor.

Its subcellular location is the plastid. The protein localises to the chloroplast thylakoid membrane. One of the components of the core complex of photosystem II (PSII). It binds chlorophyll and helps catalyze the primary light-induced photochemical processes of PSII. PSII is a light-driven water:plastoquinone oxidoreductase, using light energy to abstract electrons from H(2)O, generating O(2) and a proton gradient subsequently used for ATP formation. In Saccharum hybrid (Sugarcane), this protein is Photosystem II CP43 reaction center protein.